An 89-amino-acid polypeptide reads, in one-letter code: Large ribosomal subunit protein bL27 (89 aa).

Residues 1–26 (MAHKKAGGSSKNGRDSNAQRRGVKRF) form a disordered region.

This sequence belongs to the bacterial ribosomal protein bL27 family.

This Maridesulfovibrio salexigens (strain ATCC 14822 / DSM 2638 / NCIMB 8403 / VKM B-1763) (Desulfovibrio salexigens) protein is Large ribosomal subunit protein bL27.